Here is a 186-residue protein sequence, read N- to C-terminus: Elongation factor P (186 aa).

Belongs to the elongation factor P family.

The protein resides in the cytoplasm. It participates in protein biosynthesis; polypeptide chain elongation. In terms of biological role, involved in peptide bond synthesis. Stimulates efficient translation and peptide-bond synthesis on native or reconstituted 70S ribosomes in vitro. Probably functions indirectly by altering the affinity of the ribosome for aminoacyl-tRNA, thus increasing their reactivity as acceptors for peptidyl transferase. This chain is Elongation factor P, found in Prochlorococcus marinus (strain MIT 9313).